Here is a 389-residue protein sequence, read N- to C-terminus: GTPase Obg (389 aa).

One can recognise an Obg domain in the interval 1–159 (MKFVDEAVIK…RELRLELLLL (159 aa)). An OBG-type G domain is found at 160 to 333 (ADVGMLGLPN…LCYKLADFME (174 aa)). Residues 166-173 (GLPNAGKS), 191-195 (FTTLI), 213-216 (DIPG), 283-286 (NKVD), and 314-316 (SAV) each bind GTP. Mg(2+)-binding residues include serine 173 and threonine 193. The disordered stretch occupies residues 359–389 (NQGEVITEDDDDDWDDWDDEEDDGHVIYVRE). The span at 364–381 (ITEDDDDDWDDWDDEEDD) shows a compositional bias: acidic residues.

The protein belongs to the TRAFAC class OBG-HflX-like GTPase superfamily. OBG GTPase family. In terms of assembly, monomer. The cofactor is Mg(2+).

Its subcellular location is the cytoplasm. An essential GTPase which binds GTP, GDP and possibly (p)ppGpp with moderate affinity, with high nucleotide exchange rates and a fairly low GTP hydrolysis rate. Plays a role in control of the cell cycle, stress response, ribosome biogenesis and in those bacteria that undergo differentiation, in morphogenesis control. This is GTPase Obg from Vibrio vulnificus (strain CMCP6).